A 384-amino-acid chain; its full sequence is Deoxyguanosinetriphosphate triphosphohydrolase-like protein (384 aa).

The disordered stretch occupies residues 12-39; the sequence is ELASYASDPSKTRGRRHSEPPPENRTEF. The segment covering 28–39 has biased composition (basic and acidic residues); the sequence is HSEPPPENRTEF. Residues 73–208 enclose the HD domain; that stretch reads RLTHSLEVAQ…ANLADEVAYN (136 aa).

This sequence belongs to the dGTPase family. Type 2 subfamily.

The sequence is that of Deoxyguanosinetriphosphate triphosphohydrolase-like protein from Bordetella parapertussis (strain 12822 / ATCC BAA-587 / NCTC 13253).